The primary structure comprises 149 residues: Cytochrome c-type biogenesis protein CcmE (149 aa).

Residues 1–7 are Cytoplasmic-facing; it reads MKPRHKK. The chain crosses the membrane as a helical; Signal-anchor for type II membrane protein span at residues 8–28; the sequence is MAVIALSVSALTVAVVLVLNA. At 29–149 the chain is on the periplasmic side; sequence FQSNLVFFFS…AKAQKTSLAQ (121 aa). Residues H123 and Y127 each contribute to the heme site.

Belongs to the CcmE/CycJ family.

The protein resides in the cell inner membrane. Functionally, heme chaperone required for the biogenesis of c-type cytochromes. Transiently binds heme delivered by CcmC and transfers the heme to apo-cytochromes in a process facilitated by CcmF and CcmH. In Nitrosomonas europaea (strain ATCC 19718 / CIP 103999 / KCTC 2705 / NBRC 14298), this protein is Cytochrome c-type biogenesis protein CcmE.